A 187-amino-acid polypeptide reads, in one-letter code: Flavin prenyltransferase UbiX (187 aa).

FMN contacts are provided by residues 9–11, Ser-34, and Arg-123; that span reads GAS. Positions 153 and 169 each coordinate dimethylallyl phosphate.

It belongs to the UbiX/PAD1 family.

It carries out the reaction dimethylallyl phosphate + FMNH2 = prenylated FMNH2 + phosphate. Flavin prenyltransferase that catalyzes the synthesis of the prenylated FMN cofactor (prenyl-FMN) for 4-hydroxy-3-polyprenylbenzoic acid decarboxylase UbiD. The prenyltransferase is metal-independent and links a dimethylallyl moiety from dimethylallyl monophosphate (DMAP) to the flavin N5 and C6 atoms of FMN. The chain is Flavin prenyltransferase UbiX from Helicobacter pylori (strain ATCC 700392 / 26695) (Campylobacter pylori).